Consider the following 148-residue polypeptide: Mediator of RNA polymerase II transcription subunit 31 (148 aa).

This sequence belongs to the Mediator complex subunit 31 family. In terms of assembly, component of the Mediator complex.

It localises to the nucleus. Component of the Mediator complex, a coactivator involved in the regulated transcription of nearly all RNA polymerase II-dependent genes. Mediator functions as a bridge to convey information from gene-specific regulatory proteins to the basal RNA polymerase II transcription machinery. Mediator is recruited to promoters by direct interactions with regulatory proteins and serves as a scaffold for the assembly of a functional preinitiation complex with RNA polymerase II and the general transcription factors. This Taenia solium (Pork tapeworm) protein is Mediator of RNA polymerase II transcription subunit 31.